Consider the following 71-residue polypeptide: ATP synthase F(0) complex subunit e, mitochondrial (71 aa).

Lysine 34 is modified (N6-acetyllysine). Position 68 is a phosphoserine (serine 68).

This sequence belongs to the ATPase e subunit family. As to quaternary structure, component of the ATP synthase complex composed at least of ATP5F1A/subunit alpha, ATP5F1B/subunit beta, ATP5MC1/subunit c (homooctomer), MT-ATP6/subunit a, MT-ATP8/subunit 8, ATP5ME/subunit e, ATP5MF/subunit f, ATP5MG/subunit g, ATP5MK/subunit k, ATP5MJ/subunit j, ATP5F1C/subunit gamma, ATP5F1D/subunit delta, ATP5F1E/subunit epsilon, ATP5PF/subunit F6, ATP5PB/subunit b, ATP5PD/subunit d, ATP5PO/subunit OSCP. ATP synthase complex consists of a soluble F(1) head domain (subunits alpha(3) and beta(3)) - the catalytic core - and a membrane F(0) domain - the membrane proton channel (subunits c, a, 8, e, f, g, k and j). These two domains are linked by a central stalk (subunits gamma, delta, and epsilon) rotating inside the F1 region and a stationary peripheral stalk (subunits F6, b, d, and OSCP).

The protein resides in the mitochondrion. The protein localises to the mitochondrion inner membrane. Functionally, subunit e, of the mitochondrial membrane ATP synthase complex (F(1)F(0) ATP synthase or Complex V) that produces ATP from ADP in the presence of a proton gradient across the membrane which is generated by electron transport complexes of the respiratory chain. ATP synthase complex consist of a soluble F(1) head domain - the catalytic core - and a membrane F(1) domain - the membrane proton channel. These two domains are linked by a central stalk rotating inside the F(1) region and a stationary peripheral stalk. During catalysis, ATP synthesis in the catalytic domain of F(1) is coupled via a rotary mechanism of the central stalk subunits to proton translocation. In vivo, can only synthesize ATP although its ATP hydrolase activity can be activated artificially in vitro. Part of the complex F(0) domain. The chain is ATP synthase F(0) complex subunit e, mitochondrial from Sus scrofa (Pig).